A 363-amino-acid polypeptide reads, in one-letter code: Inositol-3-phosphate synthase (363 aa).

Residues aspartate 68, alanine 127, tyrosine 147, serine 190, aspartate 225, and lysine 238 each contribute to the NAD(+) site.

The protein belongs to the myo-inositol 1-phosphate synthase family. Monomer. NAD(+) serves as cofactor.

The catalysed reaction is D-glucose 6-phosphate = 1D-myo-inositol 3-phosphate. The protein operates within polyol metabolism; myo-inositol biosynthesis; myo-inositol from D-glucose 6-phosphate: step 1/2. Functionally, key enzyme in myo-inositol biosynthesis pathway that catalyzes the conversion of glucose 6-phosphate to 1D-myo-inositol 3-phosphate in a NAD-dependent manner. Plays a key role in oxidative stress resistance as its product is the precursor of the protective antioxidant mycothiol (MSH or AcCys-GlcN-Ins). This Corynebacterium glutamicum (strain ATCC 13032 / DSM 20300 / JCM 1318 / BCRC 11384 / CCUG 27702 / LMG 3730 / NBRC 12168 / NCIMB 10025 / NRRL B-2784 / 534) protein is Inositol-3-phosphate synthase.